Here is a 205-residue protein sequence, read N- to C-terminus: Outer-membrane lipoprotein LolB (205 aa).

The N-terminal stretch at 1-17 (MFLRHVIVFSFIALLAG) is a signal peptide. Cysteine 18 carries the N-palmitoyl cysteine lipid modification. A lipid anchor (S-diacylglycerol cysteine) is attached at cysteine 18.

It belongs to the LolB family. In terms of assembly, monomer.

It localises to the cell outer membrane. In terms of biological role, plays a critical role in the incorporation of lipoproteins in the outer membrane after they are released by the LolA protein. This Pseudomonas fluorescens (strain Pf0-1) protein is Outer-membrane lipoprotein LolB.